The primary structure comprises 238 residues: Sugar fermentation stimulation protein homolog (238 aa).

It belongs to the SfsA family.

This is Sugar fermentation stimulation protein homolog from Pseudomonas entomophila (strain L48).